A 274-amino-acid polypeptide reads, in one-letter code: Kit ligand (274 aa).

Positions 1–25 (MKKTQTWIVTCIYLQLLLFNPLVKT) are cleaved as a signal peptide. Residues 26 to 215 (KGLCRNRVTD…TNPIEDSSIQ (190 aa)) are Extracellular-facing. Disulfide bonds link Cys29–Cys114 and Cys68–Cys164. Residues Asn90, Asn97, Asn145, and Asn196 are each glycosylated (N-linked (GlcNAc...) asparagine). A helical transmembrane segment spans residues 216–238 (WAVMALPACFSLVIGFAFGAFYW). The Cytoplasmic portion of the chain corresponds to 239–274 (KKKQPNLTRTVENIQINEEDNEISMLQEKEREFQEV).

Belongs to the SCF family. Homodimer, non-covalently linked. A soluble form is produced by proteolytic processing of isoform 1 in the extracellular domain.

It is found in the cell membrane. It localises to the secreted. The protein resides in the cytoplasm. The protein localises to the cytoskeleton. Its subcellular location is the cell projection. It is found in the lamellipodium. It localises to the filopodium. In terms of biological role, stimulates the proliferation of mast cells. Able to augment the proliferation of both myeloid and lymphoid hematopoietic progenitors in bone marrow culture. Also mediates cell-cell adhesion. Acts synergistically with other cytokines, probably interleukins. This is Kit ligand (KITLG) from Felis catus (Cat).